Consider the following 620-residue polypeptide: Cilia- and flagella-associated protein 52 (620 aa).

WD repeat units lie at residues G62–R106, L109–G150, L156–W195, Q203–T242, Q288–V327, C330–R369, V372–V411, A415–E454, E459–M498, L500–E539, S543–V582, and G585–S620.

This sequence belongs to the CFAP52 family. As to quaternary structure, microtubule inner protein component of sperm flagellar doublet microtubules. Interacts with BRCA2. Interacts with the CCT chaperonin complex. Interacts with HSP70. Interacts with AK8. Interacts with CFAP45. Interacts with DNAI1. Interacts with IQDC. As to expression, expressed in respiratory cells and sperm (at protein level).

It localises to the cytoplasm. The protein localises to the cytoskeleton. Its subcellular location is the cilium axoneme. It is found in the flagellum axoneme. In terms of biological role, microtubule inner protein (MIP) part of the dynein-decorated doublet microtubules (DMTs) in cilia axoneme. Important for proper ciliary and flagellar beating. May act in cooperation with CFAP45 and axonemal dynein subunit DNAH11. May play a role in cell growth and/or survival. The chain is Cilia- and flagella-associated protein 52 (CFAP52) from Sus scrofa (Pig).